The sequence spans 163 residues: Arginine repressor (163 aa).

The protein belongs to the ArgR family.

The protein resides in the cytoplasm. It participates in amino-acid biosynthesis; L-arginine biosynthesis [regulation]. Its function is as follows. Regulates arginine biosynthesis genes. The sequence is that of Arginine repressor from Anaeromyxobacter dehalogenans (strain 2CP-C).